The following is a 1166-amino-acid chain: Myosin-1 (1166 aa).

Positions 1–13 (MSQKVTPFMQSLK) are enriched in polar residues. Residues 1-71 (MSQKVTPFMQ…AGDSEDSPYS (71 aa)) form a disordered region. A Phosphoserine modification is found at serine 14. The segment covering 32–45 (NSSGASVRLTNSNV) has biased composition (polar residues). One can recognise a Myosin N-terminal SH3-like domain in the interval 112–161 (KKILQSWIQLPNGNWELGKILSTSGEESVISLPEGKVIKVISETLVPANP). One can recognise a Myosin motor domain in the interval 165 to 837 (DGVDDLMQLS…QIGVLEDTRN (673 aa)). Residues 256–263 (GESGAGKT) and 304–312 (NDNSSRFGK) each bind ATP. Actin-binding stretches follow at residues 589–623 (LFEK…KQHL) and 717–739 (LFQL…KPNN). IQ domains lie at 839 to 868 (TLHG…GISI), 862 to 891 (LKRG…RHKA), 888 to 917 (RHKA…ASVV), and 911 to 940 (IADA…LKSG). Positions 955-1005 (SVLSELQRRVLKAEAALREKEEENDILQQRLQQYENRWSEYETKMKSMEEI) form a coiled coil. The segment at 1030-1065 (ARNSDASVNASDATDWDSSSNQFRSQTSNGVGSRLQ) is disordered. Residues 1032 to 1060 (NSDASVNASDATDWDSSSNQFRSQTSNGV) are compositionally biased toward polar residues.

Belongs to the TRAFAC class myosin-kinesin ATPase superfamily. Myosin family. Plant myosin class VIII subfamily. In terms of assembly, homodimer.

The protein resides in the cell junction. It localises to the plasmodesma. Its subcellular location is the cytoplasm. The protein localises to the cytoskeleton. It is found in the phragmoplast. The protein resides in the endosome. It localises to the endoplasmic reticulum. In terms of biological role, myosin heavy chain that is required for the cell cycle-regulated transport of various organelles and proteins for their segregation. Functions by binding with its tail domain to receptor proteins on organelles and exerting force with its N-terminal motor domain against actin filaments, thereby transporting its cargo along polarized actin cables. Involved in endocytosis via its action in endosomal trafficking. In Arabidopsis thaliana (Mouse-ear cress), this protein is Myosin-1 (VIII-1).